Here is a 78-residue protein sequence, read N- to C-terminus: Kassorin-S (78 aa).

The signal sequence occupies residues 1–22 (MLTLKKSMLLLFFLGMVSLSLA). The propeptide occupies 23 to 64 (NSKRADEEGEDKRADEEGEDKRADEEGEDKRADEEGEEKRKR). The interval 24–60 (SKRADEEGEDKRADEEGEDKRADEEGEDKRADEEGEE) is disordered. Positions 25-60 (KRADEEGEDKRADEEGEDKRADEEGEDKRADEEGEE) are enriched in basic and acidic residues. Leu-77 carries the leucine amide modification.

This sequence belongs to the frog skin active peptide (FSAP) family. Brevinin subfamily. In terms of tissue distribution, expressed by the skin glands.

It localises to the secreted. Its function is as follows. Antimicrobial peptide. Active against the Gram-positive bacterium S.aureus (MIC=30 uM) and the yeast C.albicans (MIC=100 uM). Not effective against the Gram-negative bacterium E.coli at concentrations up to 250 uM. Lacks ability to induce contraction of smooth muscle in isolated guinea pig urinary bladder. Elicits histamine release from rat peritoneal mast cells. This Kassina senegalensis (Senegal running frog) protein is Kassorin-S.